Reading from the N-terminus, the 530-residue chain is MNNPRPIRRALISVSDKTGIVEFAQALTERGVDILSTGGTARLLAEKNIPVTEVSDYTGFPEMMDGRVKTLHPKVHGGVLGRRGQDDGIMEQHGINPIDIVVVNLYPFAETVAKEGCTLADAVENIDIGGPTMVRSAAKNHKDVTIVVNAHDYDRVIAEMDTNDKSLTQATRFDLAIAAFEHTASYDGMIANYFGTMVPSYGENKEGDNESKFPRTFNQQFEKKQDMRYGENSHQAAAFYVEANPEEASVSTARQIQGKALSYNNIADTDAALECVKEFNEPACVIVKHANPCGVALGKDVLEAYHRAYQTDPTSAFGGIIAFNRELDAATATAITERQFVEVIIAPSVSAEAIEIIAAKKNLRLLECGEWSTKTTEFDIKRVNGGLLVQDRDQGMVSEDELEVVSKRQPTAEELKDALFCWKVAKYVKSNAIVYSKGDMTIGVGAGQMSRVYSAKIAGIKAADEGLVVEGCAMASDAFFPFRDGIDAAAEAGIKCVIQPGGSMRDDEVIAAADEHGMAMIFTGMRHFRH.

Residues 1–148 (MNNPRPIRRA…KNHKDVTIVV (148 aa)) enclose the MGS-like domain.

It belongs to the PurH family.

It carries out the reaction (6R)-10-formyltetrahydrofolate + 5-amino-1-(5-phospho-beta-D-ribosyl)imidazole-4-carboxamide = 5-formamido-1-(5-phospho-D-ribosyl)imidazole-4-carboxamide + (6S)-5,6,7,8-tetrahydrofolate. It catalyses the reaction IMP + H2O = 5-formamido-1-(5-phospho-D-ribosyl)imidazole-4-carboxamide. The protein operates within purine metabolism; IMP biosynthesis via de novo pathway; 5-formamido-1-(5-phospho-D-ribosyl)imidazole-4-carboxamide from 5-amino-1-(5-phospho-D-ribosyl)imidazole-4-carboxamide (10-formyl THF route): step 1/1. It participates in purine metabolism; IMP biosynthesis via de novo pathway; IMP from 5-formamido-1-(5-phospho-D-ribosyl)imidazole-4-carboxamide: step 1/1. This Aliivibrio salmonicida (strain LFI1238) (Vibrio salmonicida (strain LFI1238)) protein is Bifunctional purine biosynthesis protein PurH.